A 161-amino-acid polypeptide reads, in one-letter code: Ribosome maturation factor RimP (161 aa).

Belongs to the RimP family.

The protein localises to the cytoplasm. In terms of biological role, required for maturation of 30S ribosomal subunits. The protein is Ribosome maturation factor RimP of Desulfosudis oleivorans (strain DSM 6200 / JCM 39069 / Hxd3) (Desulfococcus oleovorans).